Consider the following 175-residue polypeptide: Co-chaperone protein HscB homolog (175 aa).

A J domain is found at 7–79; sequence SHFDLFHLPA…LKRASYLLSL (73 aa).

It belongs to the HscB family. Interacts with HscA and stimulates its ATPase activity.

In terms of biological role, co-chaperone involved in the maturation of iron-sulfur cluster-containing proteins. Seems to help targeting proteins to be folded toward HscA. This Burkholderia cenocepacia (strain ATCC BAA-245 / DSM 16553 / LMG 16656 / NCTC 13227 / J2315 / CF5610) (Burkholderia cepacia (strain J2315)) protein is Co-chaperone protein HscB homolog.